A 362-amino-acid chain; its full sequence is Chorismate synthase (362 aa).

Arginine 48 and arginine 54 together coordinate NADP(+). FMN is bound by residues 125–127 (RSS), 237–238 (NA), glycine 277, 292–296 (KPTSS), and arginine 318.

This sequence belongs to the chorismate synthase family. In terms of assembly, homotetramer. FMNH2 serves as cofactor.

It catalyses the reaction 5-O-(1-carboxyvinyl)-3-phosphoshikimate = chorismate + phosphate. Its pathway is metabolic intermediate biosynthesis; chorismate biosynthesis; chorismate from D-erythrose 4-phosphate and phosphoenolpyruvate: step 7/7. Its function is as follows. Catalyzes the anti-1,4-elimination of the C-3 phosphate and the C-6 proR hydrogen from 5-enolpyruvylshikimate-3-phosphate (EPSP) to yield chorismate, which is the branch point compound that serves as the starting substrate for the three terminal pathways of aromatic amino acid biosynthesis. This reaction introduces a second double bond into the aromatic ring system. The chain is Chorismate synthase from Idiomarina loihiensis (strain ATCC BAA-735 / DSM 15497 / L2-TR).